The primary structure comprises 329 residues: MSWITPELIEIVVAILKAIVILLVVVVCGALLSFIERRLLGLWQDRYGPNRVGPFGMFQLGADMLKMFFKEDWTPPFADRLIFTLAPIVAMSALLMAFAVVPVTPTWGVADLNIGLLFFFAMAGLAVYAVLFAGWSSNNKFALLGSLRASAQTISYEVFMALALMGIVAQTGSFNMRDIVEYQAQHTWFIIPQFLGFCTFFIAGVAVTHRHPFDQPEAEQELADGYHIEYAGMKWGMFFVGEYIGIVLISALLVTLFFGGWHGPFGILPQLSFIWFALKTAFFIMLFILLRASLPRPRYDQVMAFSWKFCLPLTLLNLLVTGAFVLAAQ.

8 helical membrane passes run 11 to 31 (IVVA…CGAL), 81 to 101 (LIFT…FAVV), 114 to 134 (IGLL…LFAG), 154 to 174 (ISYE…TGSF), 187 to 207 (TWFI…GVAV), 238 to 258 (FFVG…TLFF), 270 to 290 (QLSF…FILL), and 309 to 329 (FCLP…LAAQ).

Belongs to the complex I subunit 1 family. In terms of assembly, NDH-1 is composed of 13 different subunits. Subunits NuoA, H, J, K, L, M, N constitute the membrane sector of the complex.

It is found in the cell inner membrane. The enzyme catalyses a quinone + NADH + 5 H(+)(in) = a quinol + NAD(+) + 4 H(+)(out). In terms of biological role, NDH-1 shuttles electrons from NADH, via FMN and iron-sulfur (Fe-S) centers, to quinones in the respiratory chain. The immediate electron acceptor for the enzyme in this species is believed to be ubiquinone. Couples the redox reaction to proton translocation (for every two electrons transferred, four hydrogen ions are translocated across the cytoplasmic membrane), and thus conserves the redox energy in a proton gradient. This subunit may bind ubiquinone. The protein is NADH-quinone oxidoreductase subunit H of Azotobacter vinelandii (strain DJ / ATCC BAA-1303).